The chain runs to 254 residues: Thiazole synthase (254 aa).

K95 acts as the Schiff-base intermediate with DXP in catalysis. Residues G156, 182 to 183 (AG), and 204 to 205 (NT) each bind 1-deoxy-D-xylulose 5-phosphate.

It belongs to the ThiG family. As to quaternary structure, homotetramer. Forms heterodimers with either ThiH or ThiS.

It localises to the cytoplasm. It carries out the reaction [ThiS sulfur-carrier protein]-C-terminal-Gly-aminoethanethioate + 2-iminoacetate + 1-deoxy-D-xylulose 5-phosphate = [ThiS sulfur-carrier protein]-C-terminal Gly-Gly + 2-[(2R,5Z)-2-carboxy-4-methylthiazol-5(2H)-ylidene]ethyl phosphate + 2 H2O + H(+). Its pathway is cofactor biosynthesis; thiamine diphosphate biosynthesis. Functionally, catalyzes the rearrangement of 1-deoxy-D-xylulose 5-phosphate (DXP) to produce the thiazole phosphate moiety of thiamine. Sulfur is provided by the thiocarboxylate moiety of the carrier protein ThiS. In vitro, sulfur can be provided by H(2)S. This chain is Thiazole synthase, found in Shewanella sp. (strain MR-7).